A 423-amino-acid polypeptide reads, in one-letter code: UDP-N-acetylglucosamine 1-carboxyvinyltransferase 1 (423 aa).

23–24 serves as a coordination point for phosphoenolpyruvate; that stretch reads KN. Arginine 96 provides a ligand contact to UDP-N-acetyl-alpha-D-glucosamine. Cysteine 120 functions as the Proton donor in the catalytic mechanism. Cysteine 120 is modified (2-(S-cysteinyl)pyruvic acid O-phosphothioketal). Residues aspartate 309 and valine 331 each coordinate UDP-N-acetyl-alpha-D-glucosamine.

The protein belongs to the EPSP synthase family. MurA subfamily.

It is found in the cytoplasm. The enzyme catalyses phosphoenolpyruvate + UDP-N-acetyl-alpha-D-glucosamine = UDP-N-acetyl-3-O-(1-carboxyvinyl)-alpha-D-glucosamine + phosphate. It functions in the pathway cell wall biogenesis; peptidoglycan biosynthesis. Its function is as follows. Cell wall formation. Adds enolpyruvyl to UDP-N-acetylglucosamine. This Streptococcus pyogenes serotype M3 (strain ATCC BAA-595 / MGAS315) protein is UDP-N-acetylglucosamine 1-carboxyvinyltransferase 1.